Reading from the N-terminus, the 569-residue chain is 3-(3-hydroxy-phenyl)propionate/3-hydroxycinnamic acid hydroxylase (569 aa).

Residues 12 to 41 and 277 to 287 contribute to the FAD site; these read DVVV…VVDE and FRKGRLMLAGD.

This sequence belongs to the PheA/TfdB FAD monooxygenase family. Requires FAD as cofactor.

The catalysed reaction is 3-(3-hydroxyphenyl)propanoate + NADH + O2 + H(+) = 3-(2,3-dihydroxyphenyl)propanoate + NAD(+) + H2O. The enzyme catalyses (2E)-3-(3-hydroxyphenyl)prop-2-enoate + NADH + O2 + H(+) = (2E)-3-(2,3-dihydroxyphenyl)prop-2-enoate + NAD(+) + H2O. Its pathway is aromatic compound metabolism; 3-phenylpropanoate degradation. Its function is as follows. Catalyzes the insertion of one atom of molecular oxygen into position 2 of the phenyl ring of 3-(3-hydroxyphenyl)propionate (3-HPP) and hydroxycinnamic acid (3HCI). The chain is 3-(3-hydroxy-phenyl)propionate/3-hydroxycinnamic acid hydroxylase from Mycolicibacterium vanbaalenii (strain DSM 7251 / JCM 13017 / BCRC 16820 / KCTC 9966 / NRRL B-24157 / PYR-1) (Mycobacterium vanbaalenii).